The primary structure comprises 257 residues: Low affinity immunoglobulin gamma Fc region receptor III-A (257 aa).

An N-terminal signal peptide occupies residues 1-19 (MWQLLSPTALLLLVSVPGT). Residues 20-209 (HAEDPPKSVV…ILSFFLPWHQ (190 aa)) are Extracellular-facing. 2 Ig-like C2-type domains span residues 25–104 (PKSV…LRLE) and 108–190 (GWLL…VKVT). 2 disulfide bridges follow: cysteine 48/cysteine 90 and cysteine 129/cysteine 173. Residues asparagine 64, asparagine 134, and asparagine 162 are each glycosylated (N-linked (GlcNAc...) asparagine). Aspartate 181 carries N-linked (GlcNAc...) asparagine; in variant N-181 glycosylation. A helical transmembrane segment spans residues 210 to 230 (IIFCLVMGFLFAVDTGLYFSV). Topologically, residues 231–257 (RKVLRSSKEDWRNGKVTWSRDPADKGG) are cytoplasmic.

As to quaternary structure, forms a heterooligomeric complex with ITAM-containing signaling subunits FCER1G. Interacts (via transmembrane domain) with signaling subunits; this interaction is a prerequisite for receptor complex expression on the cell surface and intracellular signal transduction. Binds the Fc region of antigen-complexed IgG. In terms of tissue distribution, expressed in polymorphonuclear leukocytes, pulmonary alveolar macrophages and peripheral blood mononuclear cells (at protein level). Found in spleen, and at very low levels in lymph nodes but not in thymus or liver.

The protein resides in the cell membrane. Functionally, receptor for the invariable Fc fragment of immunoglobulin gamma (IgG). Optimally activated upon binding of clustered antigen-IgG complexes displayed on cell surfaces, triggers lysis of antibody-coated cells, a process known as antibody-dependent cellular cytotoxicity (ADCC). Does not bind free monomeric IgG, thus avoiding inappropriate effector cell activation in the absence of antigenic trigger. Mediates IgG effector functions on natural killer (NK) cells. Binds antigen-IgG complexes generated upon infection and triggers NK cell-dependent cytokine production and degranulation to limit viral load and propagation. Fc-binding subunit that associates with FCER1G adapter to form functional signaling complexes. Following the engagement of antigen-IgG complexes, triggers phosphorylation of immunoreceptor tyrosine-based activation motif (ITAM)-containing adapter with subsequent activation of phosphatidylinositol 3-kinase signaling and sustained elevation of intracellular calcium that ultimately drive NK cell activation. Mediates enhanced ADCC in response to afucosylated IgGs. The protein is Low affinity immunoglobulin gamma Fc region receptor III-A of Sus scrofa (Pig).